The sequence spans 700 residues: Elongation factor G (700 aa).

In terms of domain architecture, tr-type G spans 8–290; the sequence is SLYRNIGISA…AVIDYLPAPT (283 aa). GTP contacts are provided by residues 17-24, 88-92, and 142-145; these read AHIDAGKT, DTPGH, and NKMD.

The protein belongs to the TRAFAC class translation factor GTPase superfamily. Classic translation factor GTPase family. EF-G/EF-2 subfamily.

It localises to the cytoplasm. Functionally, catalyzes the GTP-dependent ribosomal translocation step during translation elongation. During this step, the ribosome changes from the pre-translocational (PRE) to the post-translocational (POST) state as the newly formed A-site-bound peptidyl-tRNA and P-site-bound deacylated tRNA move to the P and E sites, respectively. Catalyzes the coordinated movement of the two tRNA molecules, the mRNA and conformational changes in the ribosome. This is Elongation factor G from Histophilus somni (strain 129Pt) (Haemophilus somnus).